A 230-amino-acid chain; its full sequence is UPF0173 metal-dependent hydrolase Pden_0574 (230 aa).

The protein belongs to the UPF0173 family.

This chain is UPF0173 metal-dependent hydrolase Pden_0574, found in Paracoccus denitrificans (strain Pd 1222).